A 284-amino-acid chain; its full sequence is L-ribulose-5-phosphate 3-epimerase UlaE (284 aa).

This sequence belongs to the L-ribulose-5-phosphate 3-epimerase family.

It carries out the reaction L-ribulose 5-phosphate = L-xylulose 5-phosphate. Its pathway is cofactor degradation; L-ascorbate degradation; D-xylulose 5-phosphate from L-ascorbate: step 3/4. Catalyzes the isomerization of L-xylulose-5-phosphate to L-ribulose-5-phosphate. Is involved in the anaerobic L-ascorbate utilization. The chain is L-ribulose-5-phosphate 3-epimerase UlaE from Shigella sonnei (strain Ss046).